The sequence spans 542 residues: Neurofilament light polypeptide (542 aa).

The residue at position 2 (Ser2) is an N-acetylserine. The interval 2–93 is head; the sequence is SSFSYEPYFS…KSIRTQEKAQ (92 aa). Thr21 is a glycosylation site (O-linked (GlcNAc) threonine). At Arg23 the chain carries Asymmetric dimethylarginine; alternate. An Omega-N-methylarginine; alternate modification is found at Arg23. Ser27 carries an O-linked (GlcNAc) serine glycan. Arg30 carries the omega-N-methylarginine modification. Tyr43 carries the phosphotyrosine modification. Phosphoserine occurs at positions 56, 67, and 103. The region spanning 90 to 401 is the IF rod domain; the sequence is EKAQLQDLND…KLLEGEETRL (312 aa). The segment at 94–125 is coil 1A; the sequence is LQDLNDRFASFIERVHELEQQNKVLEAELLVL. The tract at residues 126-138 is linker 1; the sequence is RQKHSEPSRFRAL. The tract at residues 139–234 is coil 1B; it reads YEQEIRDLRL…KVHEEEIAEL (96 aa). The tract at residues 235–253 is linker 12; it reads QAQIQYAQISVEMDVSSKP. A coil 2A region spans residues 254–272; the sequence is DLSAALKDIRAQYEKLAAK. A linker 2 region spans residues 273–281; the sequence is NMQNAEEWF. The coil 2B stretch occupies residues 282–397; it reads KSRFTVLTES…AAYRKLLEGE (116 aa). An epitope; recognized by IF-specific monoclonal antibody region spans residues 382–392; that stretch reads ALDIEIAAYRK. Residues 398-444 form a tail, subdomain A region; sequence ETRLSFTSVGSITSGYSQSSQVFGRSAYSGLQSSSYLMSARAFPAYY. The tail stretch occupies residues 398–542; it reads ETRLSFTSVG…GEEQAAKKKD (145 aa). Residues 445-542 form a tail, subdomain B (acidic) region; it reads TSHVQEEQSE…GEEQAAKKKD (98 aa). A disordered region spans residues 451-542; it reads EQSEVEETIE…GEEQAAKKKD (92 aa). Residue Ser453 is modified to Phosphoserine. The span at 460 to 471 shows a compositional bias: basic and acidic residues; it reads EATKAEEAKDEP. Residues 472-527 are compositionally biased toward acidic residues; it reads PSEGEAEEEEKEKEEGEEEEGAEEEEAAKDESEDAKEEEGGEGEEEDTKESEEEEK. Residues Ser473 and Ser503 each carry the phosphoserine modification. Thr519 is subject to Phosphothreonine. Phosphoserine is present on residues Ser522 and Ser531. Residues 528 to 542 are compositionally biased toward basic and acidic residues; the sequence is KEESAGEEQAAKKKD.

Belongs to the intermediate filament family. As to quaternary structure, forms homodimers (in vitro). Forms heterodimers with NEFH or NEFM; which can further hetero-oligomerize (in vitro). Forms heterodimers with INA (in vitro). Interacts with ARHGEF28. Interacts with TRIM2. O-glycosylated; contains three N-acetylglucosamine side chains. Post-translationally, phosphorylated in the head and rod regions by the PKC kinase PKN1, leading to the inhibition of polymerization. In terms of processing, ubiquitinated in the presence of TRIM2 and UBE2D1. Expressed in the dorsal root ganglion neurons (at protein level).

The protein localises to the cell projection. It localises to the axon. It is found in the cytoplasm. The protein resides in the cytoskeleton. In terms of biological role, neurofilaments usually contain three intermediate filament proteins: NEFL, NEFM, and NEFH which are involved in the maintenance of neuronal caliber. May additionally cooperate with the neuronal intermediate filament proteins PRPH and INA to form neuronal filamentous networks. This chain is Neurofilament light polypeptide (Nefl), found in Rattus norvegicus (Rat).